Consider the following 360-residue polypeptide: Phosphoserine aminotransferase (360 aa).

An L-glutamate-binding site is contributed by arginine 41. Positions 101, 152, 172, and 195 each coordinate pyridoxal 5'-phosphate. The residue at position 196 (lysine 196) is an N6-(pyridoxal phosphate)lysine. Asparagine 237–threonine 238 serves as a coordination point for pyridoxal 5'-phosphate.

It belongs to the class-V pyridoxal-phosphate-dependent aminotransferase family. SerC subfamily. In terms of assembly, homodimer. It depends on pyridoxal 5'-phosphate as a cofactor.

Its subcellular location is the cytoplasm. It catalyses the reaction O-phospho-L-serine + 2-oxoglutarate = 3-phosphooxypyruvate + L-glutamate. The enzyme catalyses 4-(phosphooxy)-L-threonine + 2-oxoglutarate = (R)-3-hydroxy-2-oxo-4-phosphooxybutanoate + L-glutamate. It participates in amino-acid biosynthesis; L-serine biosynthesis; L-serine from 3-phospho-D-glycerate: step 2/3. The protein operates within cofactor biosynthesis; pyridoxine 5'-phosphate biosynthesis; pyridoxine 5'-phosphate from D-erythrose 4-phosphate: step 3/5. In terms of biological role, catalyzes the reversible conversion of 3-phosphohydroxypyruvate to phosphoserine and of 3-hydroxy-2-oxo-4-phosphonooxybutanoate to phosphohydroxythreonine. This is Phosphoserine aminotransferase from Paraburkholderia phymatum (strain DSM 17167 / CIP 108236 / LMG 21445 / STM815) (Burkholderia phymatum).